We begin with the raw amino-acid sequence, 122 residues long: Large ribosomal subunit protein uL14 (122 aa).

The protein belongs to the universal ribosomal protein uL14 family. In terms of assembly, part of the 50S ribosomal subunit. Forms a cluster with proteins L3 and L19. In the 70S ribosome, L14 and L19 interact and together make contacts with the 16S rRNA in bridges B5 and B8.

Functionally, binds to 23S rRNA. Forms part of two intersubunit bridges in the 70S ribosome. In Cytophaga hutchinsonii (strain ATCC 33406 / DSM 1761 / CIP 103989 / NBRC 15051 / NCIMB 9469 / D465), this protein is Large ribosomal subunit protein uL14.